The primary structure comprises 82 residues: Large ribosomal subunit protein uL23 (82 aa).

This sequence belongs to the universal ribosomal protein uL23 family. In terms of assembly, part of the 50S ribosomal subunit. Contacts protein L29.

Functionally, binds to 23S rRNA. One of the proteins that surrounds the polypeptide exit tunnel on the outside of the ribosome. This chain is Large ribosomal subunit protein uL23, found in Natronomonas pharaonis (strain ATCC 35678 / DSM 2160 / CIP 103997 / JCM 8858 / NBRC 14720 / NCIMB 2260 / Gabara) (Halobacterium pharaonis).